Consider the following 269-residue polypeptide: Formamidopyrimidine-DNA glycosylase (269 aa).

Residue Pro-2 is the Schiff-base intermediate with DNA of the active site. The active-site Proton donor is Glu-3. Lys-57 (proton donor; for beta-elimination activity) is an active-site residue. DNA-binding residues include His-90, Arg-109, and Lys-150. Residues 235–269 (QVYGRKGEPCRVCGTPIVATKHAQRATFYCRQCQK) form an FPG-type zinc finger. Arg-259 serves as the catalytic Proton donor; for delta-elimination activity.

This sequence belongs to the FPG family. In terms of assembly, monomer. Requires Zn(2+) as cofactor.

The catalysed reaction is Hydrolysis of DNA containing ring-opened 7-methylguanine residues, releasing 2,6-diamino-4-hydroxy-5-(N-methyl)formamidopyrimidine.. The enzyme catalyses 2'-deoxyribonucleotide-(2'-deoxyribose 5'-phosphate)-2'-deoxyribonucleotide-DNA = a 3'-end 2'-deoxyribonucleotide-(2,3-dehydro-2,3-deoxyribose 5'-phosphate)-DNA + a 5'-end 5'-phospho-2'-deoxyribonucleoside-DNA + H(+). Involved in base excision repair of DNA damaged by oxidation or by mutagenic agents. Acts as a DNA glycosylase that recognizes and removes damaged bases. Has a preference for oxidized purines, such as 7,8-dihydro-8-oxoguanine (8-oxoG). Has AP (apurinic/apyrimidinic) lyase activity and introduces nicks in the DNA strand. Cleaves the DNA backbone by beta-delta elimination to generate a single-strand break at the site of the removed base with both 3'- and 5'-phosphates. The polypeptide is Formamidopyrimidine-DNA glycosylase (Escherichia coli (strain 55989 / EAEC)).